A 217-amino-acid chain; its full sequence is MAPQLRIFVPPHPLIRHWLGIARDRQTPTPLFRTAIAELGRWLAYEAVREWLPTIPAAVQTPLAETPAEFVDFSQPLAIVPILRAGLGLVESVQQVLPTARIFHVGLKRDEVSLEPRCYLNHLPEQLEVNSRVLVLDPMLATGGSLLYTLDLLRDRGVSAEQVRVLSIVAAPPALQKLSQAYPALTIYSAIIDEQLNDKGFIVPGLGDAGDRLFGTP.

5-phospho-alpha-D-ribose 1-diphosphate is bound by residues Arg84, Arg109, and 137 to 145; that span reads DPMLATGGS. Residues Ile202 and 207–209 each bind uracil; that span reads GDA. Position 208 (Asp208) interacts with 5-phospho-alpha-D-ribose 1-diphosphate.

The protein belongs to the UPRTase family. Requires Mg(2+) as cofactor.

The catalysed reaction is UMP + diphosphate = 5-phospho-alpha-D-ribose 1-diphosphate + uracil. Its pathway is pyrimidine metabolism; UMP biosynthesis via salvage pathway; UMP from uracil: step 1/1. With respect to regulation, allosterically activated by GTP. Functionally, catalyzes the conversion of uracil and 5-phospho-alpha-D-ribose 1-diphosphate (PRPP) to UMP and diphosphate. This Synechococcus elongatus (strain ATCC 33912 / PCC 7942 / FACHB-805) (Anacystis nidulans R2) protein is Uracil phosphoribosyltransferase.